Consider the following 581-residue polypeptide: Phosphoglucomutase, cytoplasmic (581 aa).

A compositionally biased stretch (basic and acidic residues) spans 1–11 (MVFSVAKKDTT). Residues 1 to 20 (MVFSVAKKDTTPYEGQKPGT) form a disordered region. Residues arginine 24 and serine 123 each coordinate alpha-D-glucose 1,6-bisphosphate. Catalysis depends on serine 123, which acts as the Phosphoserine intermediate. 4 residues coordinate Mg(2+): serine 123, aspartate 298, aspartate 300, and aspartate 302. Serine 123 is modified (phosphoserine). Alpha-D-glucose 1,6-bisphosphate-binding residues include aspartate 302, arginine 303, threonine 366, glutamate 385, serine 387, and lysine 398.

Belongs to the phosphohexose mutase family. In terms of assembly, monomer. The cofactor is Mg(2+).

It is found in the cytoplasm. It catalyses the reaction alpha-D-glucose 1-phosphate = alpha-D-glucose 6-phosphate. It carries out the reaction O-phospho-L-seryl-[protein] + alpha-D-glucose 1-phosphate = alpha-D-glucose 1,6-bisphosphate + L-seryl-[protein]. The catalysed reaction is alpha-D-glucose 1,6-bisphosphate + L-seryl-[protein] = O-phospho-L-seryl-[protein] + alpha-D-glucose 6-phosphate. Functionally, catalyzes the reversible isomerization of alpha-D-glucose 1-phosphate to alpha-D-glucose 6-phosphate. The mechanism proceeds via the intermediate compound alpha-D-glucose 1,6-bisphosphate. This enzyme participates in both the breakdown and synthesis of glucose. The sequence is that of Phosphoglucomutase, cytoplasmic (PGM1) from Bromus inermis (Smooth brome grass).